The sequence spans 275 residues: Formamidopyrimidine-DNA glycosylase (275 aa).

Pro-2 acts as the Schiff-base intermediate with DNA in catalysis. Glu-3 acts as the Proton donor in catalysis. The active-site Proton donor; for beta-elimination activity is Lys-59. DNA contacts are provided by His-94 and Arg-113. The segment at 241 to 275 (LVHTHAKEPCQICGTIIQKTKVNGRGTYYCPNCQN) adopts an FPG-type zinc-finger fold. The active-site Proton donor; for delta-elimination activity is Arg-265.

It belongs to the FPG family. Monomer. Zn(2+) serves as cofactor.

The enzyme catalyses Hydrolysis of DNA containing ring-opened 7-methylguanine residues, releasing 2,6-diamino-4-hydroxy-5-(N-methyl)formamidopyrimidine.. The catalysed reaction is 2'-deoxyribonucleotide-(2'-deoxyribose 5'-phosphate)-2'-deoxyribonucleotide-DNA = a 3'-end 2'-deoxyribonucleotide-(2,3-dehydro-2,3-deoxyribose 5'-phosphate)-DNA + a 5'-end 5'-phospho-2'-deoxyribonucleoside-DNA + H(+). Functionally, involved in base excision repair of DNA damaged by oxidation or by mutagenic agents. Acts as a DNA glycosylase that recognizes and removes damaged bases. Has a preference for oxidized purines, such as 7,8-dihydro-8-oxoguanine (8-oxoG). Has AP (apurinic/apyrimidinic) lyase activity and introduces nicks in the DNA strand. Cleaves the DNA backbone by beta-delta elimination to generate a single-strand break at the site of the removed base with both 3'- and 5'-phosphates. The sequence is that of Formamidopyrimidine-DNA glycosylase from Ureaplasma parvum serovar 3 (strain ATCC 700970).